Here is a 345-residue protein sequence, read N- to C-terminus: D-erythrose-4-phosphate dehydrogenase (345 aa).

Position 11–12 (11–12 (RI)) interacts with NAD(+). Substrate contacts are provided by residues 158–160 (SCT), Arg-204, 217–218 (TK), and Arg-240. The active-site Nucleophile is the Cys-159. Asn-322 is an NAD(+) binding site.

This sequence belongs to the glyceraldehyde-3-phosphate dehydrogenase family. Epd subfamily. As to quaternary structure, homotetramer.

The protein localises to the cytoplasm. The enzyme catalyses D-erythrose 4-phosphate + NAD(+) + H2O = 4-phospho-D-erythronate + NADH + 2 H(+). It functions in the pathway cofactor biosynthesis; pyridoxine 5'-phosphate biosynthesis; pyridoxine 5'-phosphate from D-erythrose 4-phosphate: step 1/5. Functionally, catalyzes the NAD-dependent conversion of D-erythrose 4-phosphate to 4-phosphoerythronate. The sequence is that of D-erythrose-4-phosphate dehydrogenase from Vibrio campbellii (strain ATCC BAA-1116).